The primary structure comprises 381 residues: tRNA pseudouridine synthase Pus10 (381 aa).

The active-site Nucleophile is the aspartate 226.

This sequence belongs to the pseudouridine synthase Pus10 family.

It carries out the reaction uridine(54) in tRNA = pseudouridine(54) in tRNA. The enzyme catalyses uridine(55) in tRNA = pseudouridine(55) in tRNA. Its function is as follows. Responsible for synthesis of pseudouridine from uracil-54 and uracil-55 in the psi GC loop of transfer RNAs. This chain is tRNA pseudouridine synthase Pus10, found in Nitrosopumilus maritimus (strain SCM1).